A 470-amino-acid polypeptide reads, in one-letter code: Ribulose bisphosphate carboxylase large chain (470 aa).

Asn115 and Thr165 together coordinate substrate. Residue Lys167 is the Proton acceptor of the active site. Lys169 is a substrate binding site. Lys193, Asp195, and Glu196 together coordinate Mg(2+). Position 193 is an N6-carboxylysine (Lys193). The Proton acceptor role is filled by His286. Substrate is bound by residues Arg287, His319, and Ser371.

It belongs to the RuBisCO large chain family. Type I subfamily. In terms of assembly, heterohexadecamer of 8 large chains and 8 small chains. The cofactor is Mg(2+).

The protein resides in the carboxysome. It catalyses the reaction 2 (2R)-3-phosphoglycerate + 2 H(+) = D-ribulose 1,5-bisphosphate + CO2 + H2O. The catalysed reaction is D-ribulose 1,5-bisphosphate + O2 = 2-phosphoglycolate + (2R)-3-phosphoglycerate + 2 H(+). RuBisCO catalyzes two reactions: the carboxylation of D-ribulose 1,5-bisphosphate, the primary event in carbon dioxide fixation, as well as the oxidative fragmentation of the pentose substrate in the photorespiration process. Both reactions occur simultaneously and in competition at the same active site. In Prochlorococcus marinus (strain NATL1A), this protein is Ribulose bisphosphate carboxylase large chain.